Here is a 179-residue protein sequence, read N- to C-terminus: MSRIGRLPIPVPAGVDVTIDGRTVTVKGPRGTLTHTIAEPITVEKAEDGTLHVRRPDDENRTRGLHGLTRTLIANMITGVTQGFAKTLEIVGTGYRVQARGSDLEFALGFSHPVVVRPPEGISFEVQTPTRFVVHGIDKQKVGEVAANIRKLRKPEPYKGKGVRYQGENVRRKVGKAGK.

The protein belongs to the universal ribosomal protein uL6 family. As to quaternary structure, part of the 50S ribosomal subunit.

Functionally, this protein binds to the 23S rRNA, and is important in its secondary structure. It is located near the subunit interface in the base of the L7/L12 stalk, and near the tRNA binding site of the peptidyltransferase center. In Acidothermus cellulolyticus (strain ATCC 43068 / DSM 8971 / 11B), this protein is Large ribosomal subunit protein uL6.